Here is an 89-residue protein sequence, read N- to C-terminus: Small ribosomal subunit protein bS20 (89 aa).

The protein belongs to the bacterial ribosomal protein bS20 family.

Its function is as follows. Binds directly to 16S ribosomal RNA. The polypeptide is Small ribosomal subunit protein bS20 (Wolbachia pipientis wMel).